A 187-amino-acid chain; its full sequence is Ribosome maturation factor RimM (187 aa).

Residues 96-169 (EDEFFYADLE…KLVIDPTAAG (74 aa)) enclose the PRC barrel domain.

The protein belongs to the RimM family. As to quaternary structure, binds ribosomal protein uS19.

It is found in the cytoplasm. Its function is as follows. An accessory protein needed during the final step in the assembly of 30S ribosomal subunit, possibly for assembly of the head region. Essential for efficient processing of 16S rRNA. May be needed both before and after RbfA during the maturation of 16S rRNA. It has affinity for free ribosomal 30S subunits but not for 70S ribosomes. This chain is Ribosome maturation factor RimM, found in Sinorhizobium medicae (strain WSM419) (Ensifer medicae).